The sequence spans 245 residues: tRNA pseudouridine synthase A (245 aa).

The Nucleophile role is filled by Asp52. Tyr111 lines the substrate pocket.

It belongs to the tRNA pseudouridine synthase TruA family. Homodimer.

It carries out the reaction uridine(38/39/40) in tRNA = pseudouridine(38/39/40) in tRNA. Functionally, formation of pseudouridine at positions 38, 39 and 40 in the anticodon stem and loop of transfer RNAs. The chain is tRNA pseudouridine synthase A from Afipia carboxidovorans (strain ATCC 49405 / DSM 1227 / KCTC 32145 / OM5) (Oligotropha carboxidovorans).